Reading from the N-terminus, the 273-residue chain is Bis(5'-nucleosyl)-tetraphosphatase, symmetrical (273 aa).

It belongs to the Ap4A hydrolase family.

The enzyme catalyses P(1),P(4)-bis(5'-adenosyl) tetraphosphate + H2O = 2 ADP + 2 H(+). Its function is as follows. Hydrolyzes diadenosine 5',5'''-P1,P4-tetraphosphate to yield ADP. This chain is Bis(5'-nucleosyl)-tetraphosphatase, symmetrical, found in Proteus mirabilis (strain HI4320).